Consider the following 110-residue polypeptide: Insulin (110 aa).

The first 23 residues, 1 to 23 (MALWLQAFTLLVLLVLSSPGAQS), serve as a signal peptide directing secretion. 3 disulfides stabilise this stretch: cysteine 30–cysteine 96, cysteine 42–cysteine 109, and cysteine 95–cysteine 100. Residues 56-87 (DVDPLLGFLSPKSAQENEADEYPYKDQGDLKV) constitute a propeptide, c peptide.

It belongs to the insulin family. Heterodimer of a B chain and an A chain linked by two disulfide bonds.

The protein resides in the secreted. Functionally, insulin decreases blood glucose concentration. It increases cell permeability to monosaccharides, amino acids and fatty acids. It accelerates glycolysis, the pentose phosphate cycle, and glycogen synthesis in liver. This is Insulin (ins) from Pantodon buchholzi (Freshwater butterflyfish).